A 288-amino-acid polypeptide reads, in one-letter code: Histone H3-like centromeric protein hcp-3 (288 aa).

Positions 96-194 (YHARKEQARR…VTKTRRYRPG (99 aa)) are disordered. Over residues 178 to 193 (MRAGRNRVTKTRRYRP) the composition is skewed to basic residues. The interval 191–288 (YRPGQKALEE…LYRRLCLRHL (98 aa)) is H3-like.

The protein belongs to the histone H3 family. In terms of assembly, forms a nucleosome-like histone octamer containing two molecules each of H2A, H2B, hcp-3 and H4 assembled in one hcp-3-H4 heterotetramer and two H2A-H2B heterodimers. The hcp-3-H4 heterotetramer is more compact and structurally more rigid than corresponding H3-H4 heterotetramers. Interacts with knl-2. Interacts with lin-53.

Its subcellular location is the nucleus. It localises to the chromosome. The protein localises to the centromere. It is found in the kinetochore. Its function is as follows. Histone H3-like variant which exclusively replaces conventional H3 in the nucleosome core of centromeric chromatin at the inner plate of the kinetochore. Required for recruitment and assembly of kinetochore proteins, mitotic progression and chromosome segregation. May serve as an epigenetic mark that propagates centromere identity through replication and cell division. Might promote cleavage furrow stability during cytokinesis. Not required for chromosome segregation during meiosis. The chain is Histone H3-like centromeric protein hcp-3 from Caenorhabditis elegans.